Consider the following 103-residue polypeptide: Urease subunit beta (103 aa).

Belongs to the urease beta subunit family. In terms of assembly, heterotrimer of UreA (gamma), UreB (beta) and UreC (alpha) subunits. Three heterotrimers associate to form the active enzyme.

The protein localises to the cytoplasm. The enzyme catalyses urea + 2 H2O + H(+) = hydrogencarbonate + 2 NH4(+). It participates in nitrogen metabolism; urea degradation; CO(2) and NH(3) from urea (urease route): step 1/1. In Mycobacterium marinum (strain ATCC BAA-535 / M), this protein is Urease subunit beta.